The following is a 140-amino-acid chain: Transmembrane protein 234 homolog (140 aa).

4 helical membrane-spanning segments follow: residues 14–34 (IYAVLSILLVAIMWGATNPFI), 64–84 (WQYLLPLVINQLGSIVYVLTL), 88–108 (ELSLTVPMANSLTFVFTAITA), and 116–136 (SGWKIYCGMTLVILGTVICGL).

It belongs to the TMEM234 family.

It is found in the membrane. This chain is Transmembrane protein 234 homolog, found in Anopheles gambiae (African malaria mosquito).